Reading from the N-terminus, the 520-residue chain is Non-structural protein PNS7 (520 aa).

The sequence is that of Non-structural protein PNS7 (S6) from Catharanthus roseus (Madagascar periwinkle).